Reading from the N-terminus, the 341-residue chain is Glyceraldehyde-3-phosphate dehydrogenase 2 (341 aa).

Residues Arg-13–Ile-14, Asp-35, and Lys-85 each bind NAD(+). Residues Ser-157–Thr-159, Thr-188, Thr-217–Gly-218, and Arg-240 each bind D-glyceraldehyde 3-phosphate. The Nucleophile role is filled by Cys-158. Asn-322 is a binding site for NAD(+).

Belongs to the glyceraldehyde-3-phosphate dehydrogenase family. Homotetramer.

Its subcellular location is the cytoplasm. It carries out the reaction D-glyceraldehyde 3-phosphate + phosphate + NAD(+) = (2R)-3-phospho-glyceroyl phosphate + NADH + H(+). Its pathway is carbohydrate degradation; glycolysis; pyruvate from D-glyceraldehyde 3-phosphate: step 1/5. This is Glyceraldehyde-3-phosphate dehydrogenase 2 from Caenorhabditis briggsae.